The sequence spans 366 residues: uncharacterized protein (366 aa).

Helical transmembrane passes span 30–50 (FWTYMLFYLQFLVGINGAVGI), 66–86 (IIIAFLALVNILLSLIGIIVI), 136–156 (IFISIFIGIYMISVIALGYLA), 162–182 (IILFGTGFFIIVVIIYFLDLL), 198–218 (IGVVLFISFIPPLMNYFIYDI), and 225–245 (YIPESFIVAMIVILIFVIIDV).

It localises to the cell membrane. This is an uncharacterized protein from Methanocaldococcus jannaschii (strain ATCC 43067 / DSM 2661 / JAL-1 / JCM 10045 / NBRC 100440) (Methanococcus jannaschii).